The chain runs to 156 residues: Protein CURVATURE THYLAKOID 1C, chloroplastic (156 aa).

The N-terminal 55 residues, 1-55 (MASISATLPSPLLLTQRKSNLTSIQKLPFSLTRGTNDLSPLSLTRNPSSISLMVK), are a transit peptide targeting the chloroplast. Over 56–83 (ASGESSDSSTDLDVVSTIQNVWDKSEDR) the chain is Stromal. A helical membrane pass occupies residues 84-104 (LGLIGLGFAGIVALWASLNLI). Over 105 to 109 (TAIDK) the chain is Lumenal. The helical transmembrane segment at 110–130 (LPVISSGFELVGILFSTWFTY) threads the bilayer. At 131–156 (RYLLFKPDRQELSKIVKKSVADILGQ) the chain is on the stromal side.

Belongs to the CURT family. Homo- and heterodimers and trimers. Interacts with PSAD2.

Its subcellular location is the plastid. The protein localises to the chloroplast thylakoid membrane. Functionally, determines thylakoid architecture by inducing membrane curvature. The polypeptide is Protein CURVATURE THYLAKOID 1C, chloroplastic (CURT1C) (Arabidopsis thaliana (Mouse-ear cress)).